Consider the following 221-residue polypeptide: Octanoyltransferase (221 aa).

Residues 29–208 (DEIPDTCLLL…RLTEFLLPAR (180 aa)) form the BPL/LPL catalytic domain. Residues 67-74 (RGGRITWH), 138-140 (AIG), and 151-153 (GFA) each bind substrate. The Acyl-thioester intermediate role is filled by cysteine 169.

Belongs to the LipB family.

The protein resides in the cytoplasm. It carries out the reaction octanoyl-[ACP] + L-lysyl-[protein] = N(6)-octanoyl-L-lysyl-[protein] + holo-[ACP] + H(+). Its pathway is protein modification; protein lipoylation via endogenous pathway; protein N(6)-(lipoyl)lysine from octanoyl-[acyl-carrier-protein]: step 1/2. Catalyzes the transfer of endogenously produced octanoic acid from octanoyl-acyl-carrier-protein onto the lipoyl domains of lipoate-dependent enzymes. Lipoyl-ACP can also act as a substrate although octanoyl-ACP is likely to be the physiological substrate. The polypeptide is Octanoyltransferase (Acidothermus cellulolyticus (strain ATCC 43068 / DSM 8971 / 11B)).